Consider the following 561-residue polypeptide: Lengsin (561 aa).

Disordered regions lie at residues 1-78 and 91-112; these read MNDE…WHNA and SLPS…TRDN. Over residues 26-37 the composition is skewed to basic residues; it reads NKLKRTRRKVTK. Residues 50 to 63 show a composition bias toward polar residues; it reads MANSREMSRNQTAD. Residues 135–229 enclose the GS beta-grasp domain; it reads NHLQFVRFEA…VICDTFTVTG (95 aa). Residues 236–561 enclose the GS catalytic domain; the sequence is PRYIAKRQLR…EGNKFLEYFI (326 aa).

This sequence belongs to the glutamine synthetase family. Dodecamer. Interacts with BFSP2 and VIM. Expressed in lens.

Functionally, may act as a component of the cytoskeleton or as a chaperone for the reorganization of intermediate filament proteins during terminal differentiation in the lens. Does not seem to have enzymatic activity. The polypeptide is Lengsin (Lgsn) (Rattus norvegicus (Rat)).